Reading from the N-terminus, the 401-residue chain is Phosphoglycerate kinase (401 aa).

Residues 21–23 (DLN), R37, 60–63 (HLGR), R119, and R152 each bind substrate. Residues K203, E325, and 351 to 354 (GGDT) each bind ATP.

Belongs to the phosphoglycerate kinase family. Monomer.

Its subcellular location is the cytoplasm. The enzyme catalyses (2R)-3-phosphoglycerate + ATP = (2R)-3-phospho-glyceroyl phosphate + ADP. Its pathway is carbohydrate degradation; glycolysis; pyruvate from D-glyceraldehyde 3-phosphate: step 2/5. The sequence is that of Phosphoglycerate kinase from Acidithiobacillus ferrooxidans (strain ATCC 23270 / DSM 14882 / CIP 104768 / NCIMB 8455) (Ferrobacillus ferrooxidans (strain ATCC 23270)).